The sequence spans 503 residues: Trehalose-6-phosphate synthase (503 aa).

Residue Arg-22 participates in D-glucose 6-phosphate binding. 42–43 (GG) is a binding site for UDP-alpha-D-glucose. 2 residues coordinate D-glucose 6-phosphate: Tyr-94 and Asp-148. The UDP-alpha-D-glucose site is built by Arg-290 and Lys-295. Arg-328 contributes to the D-glucose 6-phosphate binding site. 393–397 (LVAKE) contacts UDP-alpha-D-glucose. Residues 481 to 503 (GETGDSGVTGESTPAPESDSGSF) form a disordered region.

The protein belongs to the glycosyltransferase 20 family. Homotetramer.

It carries out the reaction ADP-alpha-D-glucose + D-glucose 6-phosphate = alpha,alpha-trehalose 6-phosphate + ADP + H(+). The enzyme catalyses CDP-alpha-D-glucose + D-glucose 6-phosphate = alpha,alpha-trehalose 6-phosphate + CDP + H(+). It catalyses the reaction GDP-alpha-D-glucose + D-glucose 6-phosphate = alpha,alpha-trehalose 6-phosphate + GDP + H(+). The catalysed reaction is TDP-alpha-D-glucose + D-glucose 6-phosphate = 5-methyl-UDP + alpha,alpha-trehalose 6-phosphate + H(+). It carries out the reaction D-glucose 6-phosphate + UDP-alpha-D-glucose = alpha,alpha-trehalose 6-phosphate + UDP + H(+). It participates in glycan biosynthesis; trehalose biosynthesis. With respect to regulation, stimulated by the polynucleotide FII (physiological activator), and by chondroitin sulfate (CS) and heparin. Activation by the polyanion is inhibited by high salt concentration as well as by high concentrations of mononucleoside phosphates. In terms of biological role, involved in the production of glycogen and alpha-glucan via the TreS-Pep2 branch involved in the biosynthesis of maltose-1-phosphate (M1P), and probably in the osmoprotection via the biosynthesis of trehalose. Catalyzes the transfer of glucose from UDP-glucose (UDP-Glc) to glucose-6-phosphate (Glc-6-P) to form trehalose-6-phosphate. ADP-Glc, CDP-Glc, GDP-Glc and TDP-Glc are also glucosyl donors, however, when the pyrimidine sugar nucleotides (CDP-Glc, TDP-Glc and UDP-Glc) are used as substrates, there is an absolute requirement for a high molecular weight polyanion for activity. The protein is Trehalose-6-phosphate synthase of Mycolicibacterium smegmatis (strain ATCC 700084 / mc(2)155) (Mycobacterium smegmatis).